Reading from the N-terminus, the 195-residue chain is Imidazoleglycerol-phosphate dehydratase (195 aa).

The protein belongs to the imidazoleglycerol-phosphate dehydratase family.

It is found in the cytoplasm. The catalysed reaction is D-erythro-1-(imidazol-4-yl)glycerol 3-phosphate = 3-(imidazol-4-yl)-2-oxopropyl phosphate + H2O. Its pathway is amino-acid biosynthesis; L-histidine biosynthesis; L-histidine from 5-phospho-alpha-D-ribose 1-diphosphate: step 6/9. The protein is Imidazoleglycerol-phosphate dehydratase of Geobacter sp. (strain M21).